A 186-amino-acid polypeptide reads, in one-letter code: dCTP deaminase (186 aa).

Residue 107–112 (KSTYAR) participates in dCTP binding. The active-site Proton donor/acceptor is the Glu133. The dCTP site is built by Gln152, Tyr166, and Gln176.

The protein belongs to the dCTP deaminase family. Homotrimer.

It carries out the reaction dCTP + H2O + H(+) = dUTP + NH4(+). It functions in the pathway pyrimidine metabolism; dUMP biosynthesis; dUMP from dCTP (dUTP route): step 1/2. In terms of biological role, catalyzes the deamination of dCTP to dUTP. This is dCTP deaminase from Campylobacter lari (strain RM2100 / D67 / ATCC BAA-1060).